The primary structure comprises 175 residues: Co-chaperone protein HscB homolog (175 aa).

In terms of domain architecture, J spans 7-79 (SHFDLFHLPA…LKRASYLLSL (73 aa)).

The protein belongs to the HscB family. Interacts with HscA and stimulates its ATPase activity.

Its function is as follows. Co-chaperone involved in the maturation of iron-sulfur cluster-containing proteins. Seems to help targeting proteins to be folded toward HscA. This Burkholderia cenocepacia (strain ATCC BAA-245 / DSM 16553 / LMG 16656 / NCTC 13227 / J2315 / CF5610) (Burkholderia cepacia (strain J2315)) protein is Co-chaperone protein HscB homolog.